We begin with the raw amino-acid sequence, 327 residues long: Beta-ketoacyl-[acyl-carrier-protein] synthase III 2 (327 aa).

Catalysis depends on residues C114 and H251. The segment at 252 to 256 is ACP-binding; sequence SANLR. The active site involves N281.

This sequence belongs to the thiolase-like superfamily. FabH family. In terms of assembly, homodimer.

It localises to the cytoplasm. It catalyses the reaction malonyl-[ACP] + acetyl-CoA + H(+) = 3-oxobutanoyl-[ACP] + CO2 + CoA. It functions in the pathway lipid metabolism; fatty acid biosynthesis. Functionally, catalyzes the condensation reaction of fatty acid synthesis by the addition to an acyl acceptor of two carbons from malonyl-ACP. Catalyzes the first condensation reaction which initiates fatty acid synthesis and may therefore play a role in governing the total rate of fatty acid production. Possesses both acetoacetyl-ACP synthase and acetyl transacylase activities. Its substrate specificity determines the biosynthesis of branched-chain and/or straight-chain of fatty acids. This Bacillus anthracis protein is Beta-ketoacyl-[acyl-carrier-protein] synthase III 2.